The primary structure comprises 628 residues: ATP-dependent RNA helicase mrh4, mitochondrial (628 aa).

Residues 1-40 (MSLAVRPPVCLLCRSGAPTLLPSSVSQVARSMATARLRRK) constitute a mitochondrion transit peptide. The disordered stretch occupies residues 51–109 (AKSSINQKRSGKAKFGPWSGMNQTEAHIRGEPRSRSQAALRRSGEKAADTPRKSDSPLY). Residues 92 to 105 (RSGEKAADTPRKSD) show a composition bias toward basic and acidic residues. Residues 137 to 170 (TSFDHFPLLPVVRHSIFSQALPGLVDVTPTPIQR) carry the Q motif motif. One can recognise a Helicase ATP-binding domain in the interval 190–402 (EDGDPQYDQY…RKRYPDIKRL (213 aa)). 203–210 (AETGSGKT) serves as a coordination point for ATP. Positions 228 to 253 (DKENERKEEERKAKEKEERLKNRAFD) are enriched in basic and acidic residues. The tract at residues 228–260 (DKENERKEEERKAKEKEERLKNRAFDLEPEEPP) is disordered. A DEAD box motif is present at residues 349–352 (DEAD). One can recognise a Helicase C-terminal domain in the interval 456-628 (YVGPNIKKIL…EGMFRGQALI (173 aa)).

This sequence belongs to the DEAD box helicase family. MRH4 subfamily.

Its subcellular location is the mitochondrion. It carries out the reaction ATP + H2O = ADP + phosphate + H(+). Its function is as follows. ATP-binding RNA helicase involved in mitochondrial RNA metabolism. Required for maintenance of mitochondrial DNA. The polypeptide is ATP-dependent RNA helicase mrh4, mitochondrial (mrh4) (Aspergillus oryzae (strain ATCC 42149 / RIB 40) (Yellow koji mold)).